A 507-amino-acid polypeptide reads, in one-letter code: NAD(P)H-quinone oxidoreductase chain 4, chloroplastic (507 aa).

15 helical membrane passes run 4-24, 37-57, 87-107, 111-131, 134-154, 167-187, 208-228, 242-262, 272-292, 305-325, 330-350, 386-406, 416-436, 462-482, and 483-503; these read FPWLTIIVVFPILTGSLIFLL, LCICILELLLTTYTFCYHFQL, IGPILLTGFITTLATLAAWPV, AQLFHFLMLAMYSGQIGSFSS, LLLFFLMWEFELIPVYLLLSM, FILYTAGGSIFLLIGVLGIGL, ALEVIFYVGFLIAFAVKLPII, HYSTCMLLAGILLKMGAYGLV, AHCLFSPGLIIVGAIQIIYAA, IAYSSISHMGFIIIGIGSLSD, GAILQIISHGFIGAALFFLAG, LALPGLSGFVAELLVFFGIIT, ILIAFLMAIGMILTPIYSLSM, LFVSISLLLPIIGIGIYPDFV, and LSLSVEKVEAIISHFFFSIVF.

The protein belongs to the complex I subunit 4 family.

The protein resides in the plastid. The protein localises to the chloroplast thylakoid membrane. It carries out the reaction a plastoquinone + NADH + (n+1) H(+)(in) = a plastoquinol + NAD(+) + n H(+)(out). The enzyme catalyses a plastoquinone + NADPH + (n+1) H(+)(in) = a plastoquinol + NADP(+) + n H(+)(out). This Oenothera elata subsp. hookeri (Hooker's evening primrose) protein is NAD(P)H-quinone oxidoreductase chain 4, chloroplastic (ndhD).